Reading from the N-terminus, the 557-residue chain is Dihydroxy-acid dehydratase (557 aa).

Residue cysteine 50 coordinates [2Fe-2S] cluster. Position 82 (aspartate 82) interacts with Mg(2+). Residue cysteine 123 participates in [2Fe-2S] cluster binding. Residues aspartate 124 and lysine 125 each coordinate Mg(2+). The residue at position 125 (lysine 125) is an N6-carboxylysine. Position 195 (cysteine 195) interacts with [2Fe-2S] cluster. Glutamate 447 lines the Mg(2+) pocket. The active-site Proton acceptor is the serine 473.

It belongs to the IlvD/Edd family. As to quaternary structure, homodimer. It depends on [2Fe-2S] cluster as a cofactor. Mg(2+) is required as a cofactor.

The enzyme catalyses (2R)-2,3-dihydroxy-3-methylbutanoate = 3-methyl-2-oxobutanoate + H2O. It catalyses the reaction (2R,3R)-2,3-dihydroxy-3-methylpentanoate = (S)-3-methyl-2-oxopentanoate + H2O. Its pathway is amino-acid biosynthesis; L-isoleucine biosynthesis; L-isoleucine from 2-oxobutanoate: step 3/4. It participates in amino-acid biosynthesis; L-valine biosynthesis; L-valine from pyruvate: step 3/4. In terms of biological role, functions in the biosynthesis of branched-chain amino acids. Catalyzes the dehydration of (2R,3R)-2,3-dihydroxy-3-methylpentanoate (2,3-dihydroxy-3-methylvalerate) into 2-oxo-3-methylpentanoate (2-oxo-3-methylvalerate) and of (2R)-2,3-dihydroxy-3-methylbutanoate (2,3-dihydroxyisovalerate) into 2-oxo-3-methylbutanoate (2-oxoisovalerate), the penultimate precursor to L-isoleucine and L-valine, respectively. This is Dihydroxy-acid dehydratase from Burkholderia pseudomallei (strain 1710b).